Here is a 289-residue protein sequence, read N- to C-terminus: Probable endonuclease 4 (289 aa).

Zn(2+)-binding residues include His75, His115, Glu153, Asp187, His190, His224, Asp237, His239, and Glu269.

It belongs to the AP endonuclease 2 family. Requires Zn(2+) as cofactor.

The catalysed reaction is Endonucleolytic cleavage to 5'-phosphooligonucleotide end-products.. In terms of biological role, endonuclease IV plays a role in DNA repair. It cleaves phosphodiester bonds at apurinic or apyrimidinic (AP) sites, generating a 3'-hydroxyl group and a 5'-terminal sugar phosphate. The polypeptide is Probable endonuclease 4 (Chlamydia caviae (strain ATCC VR-813 / DSM 19441 / 03DC25 / GPIC) (Chlamydophila caviae)).